The chain runs to 662 residues: Protein transport Sec1b (662 aa).

This sequence belongs to the STXBP/unc-18/SEC1 family.

Its function is as follows. Involved in the vesicle trafficking. Binds syntaxins. The chain is Protein transport Sec1b (SEC1B) from Arabidopsis thaliana (Mouse-ear cress).